The primary structure comprises 471 residues: U1 small nuclear ribonucleoprotein 70 kDa (471 aa).

The tract at residues 48–78 (FEDPRDAPPPTRAETREERMERKRREKIERR) is disordered. A compositionally biased stretch (basic and acidic residues) spans 60–78 (AETREERMERKRREKIERR). The interval 92–202 (HNDQNAQGDA…GGGLGGTRRG (111 aa)) is required for interaction with U1 RNA. In terms of domain architecture, RRM spans 103-184 (KTLFVARVNY…LVDVERGRTV (82 aa)). The disordered stretch occupies residues 187–471 (WRPRRLGGGL…NGYMMEPPME (285 aa)). The segment covering 192–201 (LGGGLGGTRR) has biased composition (gly residues). The span at 207 to 245 (NIRHSGRDDTSRYDERDRDRERERDRRERSRERDKERER) shows a compositional bias: basic and acidic residues. Basic residues predominate over residues 246–259 (RRSRSRERRRRSRS). Over residues 260 to 293 (REKEERKRSRERSRDKDKDKDKDKDKEKDKDKDR) the composition is skewed to basic and acidic residues. Basic residues predominate over residues 294-303 (DRKRRSRSRE). Composition is skewed to basic and acidic residues over residues 304-321 (RKRERDRDREKKEDRVEG) and 344-428 (IELK…ERVP).

In terms of assembly, component of the U1 snRNP. The U1 snRNP is composed of the U1 snRNA and the 7 core Sm proteins snrpb, snrpd1, snrpd2, snrpd3, snrpe, snrpf and snrpg that assemble in a heptameric protein ring on the Sm site of the small nuclear RNA to form the core snRNP, and at least three U1 snRNP-specific proteins snrnp70/U1-70K, snrpa/U1-A and snrpc/U1-C.

It localises to the nucleus speckle. The protein localises to the nucleus. The protein resides in the nucleoplasm. In terms of biological role, component of the spliceosomal U1 snRNP, which is essential for recognition of the pre-mRNA 5' splice-site and the subsequent assembly of the spliceosome. snrnp70 binds to the loop I region of U1-snRNA. In Xenopus tropicalis (Western clawed frog), this protein is U1 small nuclear ribonucleoprotein 70 kDa (snrnp70).